Consider the following 108-residue polypeptide: Parvalbumin beta 2 (108 aa).

Ala1 bears the N-acetylalanine mark. EF-hand domains follow at residues 38–73 and 77–108; these read KSAA…FSAG and LTDA…MVKG. Asp51, Asp53, Ser55, Phe57, Glu59, Glu62, Asp90, Asp92, Asp94, Lys96, and Glu101 together coordinate Ca(2+).

Belongs to the parvalbumin family.

In terms of biological role, in muscle, parvalbumin is thought to be involved in relaxation after contraction. It binds two calcium ions. This is Parvalbumin beta 2 from Merluccius bilinearis (Silver hake).